Consider the following 254-residue polypeptide: Coproheme decarboxylase (254 aa).

Residues Arg136, 150–154 (YPMDK), His177, Gln190, and Ser228 contribute to the Fe-coproporphyrin III site. Residue Tyr150 is part of the active site.

It belongs to the ChdC family. Type 1 subfamily. Requires Fe-coproporphyrin III as cofactor.

It carries out the reaction Fe-coproporphyrin III + 2 H2O2 + 2 H(+) = heme b + 2 CO2 + 4 H2O. The catalysed reaction is Fe-coproporphyrin III + H2O2 + H(+) = harderoheme III + CO2 + 2 H2O. It catalyses the reaction harderoheme III + H2O2 + H(+) = heme b + CO2 + 2 H2O. Its pathway is porphyrin-containing compound metabolism; protoheme biosynthesis. Involved in coproporphyrin-dependent heme b biosynthesis. Catalyzes the decarboxylation of Fe-coproporphyrin III (coproheme) to heme b (protoheme IX), the last step of the pathway. The reaction occurs in a stepwise manner with a three-propionate harderoheme intermediate. The polypeptide is Coproheme decarboxylase (Bacillus subtilis (strain 168)).